The sequence spans 549 residues: Cation/acetate symporter ActP (549 aa).

The Periplasmic segment spans residues 1–32; it reads MKRVLTALAAALPFAAHAADAISGAVERQPTN. The helical transmembrane segment at 33-55 threads the bilayer; that stretch reads WQAIIMFLIFVVFTLGITYWASK. Residues 56–75 lie on the Cytoplasmic side of the membrane; it reads RVRSRSDYYTAGGNITGFQN. The helical transmembrane segment at 76-98 threads the bilayer; it reads GLAIAGDYMSAASFLGISALVFT. Over 99 to 102 the chain is Periplasmic; the sequence is SGYD. A helical transmembrane segment spans residues 103 to 125; the sequence is GLIYSLGFLVGWPIILFLIAERL. Over 126-145 the chain is Cytoplasmic; that stretch reads RNLGRYTFADVASYRLKQGP. The helical transmembrane segment at 146 to 168 threads the bilayer; sequence IRILSACGSLVVVALYLIAQMVG. Topologically, residues 169 to 182 are periplasmic; it reads AGKLIELLFGLNYH. A helical membrane pass occupies residues 183–205; it reads IAVVLVGVLMMMYVLFGGMLATT. Over 206-211 the chain is Cytoplasmic; that stretch reads WVQIIK. Residues 212–234 traverse the membrane as a helical segment; that stretch reads AVLLLFGASFMAFMVMKHVGFSF. The Periplasmic segment spans residues 235-260; the sequence is NNLFTEAMAVHPKGTAIMSPGGLVQD. A helical membrane pass occupies residues 261-283; the sequence is PISALSLGLGLIFGTAGLPHILM. Over 284 to 302 the chain is Cytoplasmic; the sequence is RFFTVSDAREARKSVFYAT. Residues 303–325 traverse the membrane as a helical segment; the sequence is GFMGYFYILTFIIGFGAIMLVGA. At 326 to 361 the chain is on the periplasmic side; the sequence is NPAYKDAAGALIGGNNMAAVHLANAVGGNLFLGFIS. The chain crosses the membrane as a helical span at residues 362-384; sequence AVAFATILAVVAGLTLAGASAVS. At 385–403 the chain is on the cytoplasmic side; it reads HDLYANVFRKGATEREELK. Residues 404 to 423 traverse the membrane as a helical segment; sequence VSKITVLVLDVIAIILGVLF. The Periplasmic segment spans residues 424 to 427; sequence ENQN. Residues 428–450 traverse the membrane as a helical segment; sequence IAFMVGLAFAIAASCNFPIILLS. Residues 451–461 are Cytoplasmic-facing; sequence MYWSKLTTRGA. The helical transmembrane segment at 462–484 threads the bilayer; sequence MLGGWLGLLTAVVLMILGPTIWV. Residues 485–493 are Periplasmic-facing; it reads QILGHEKAI. The helical transmembrane segment at 494 to 516 threads the bilayer; the sequence is FPYEYPALFSISVAFLGIWFFSA. Topologically, residues 517–549 are cytoplasmic; it reads TDNSAEGNREREQFRAQFIRSQTGFGVQQGRAH.

It belongs to the sodium:solute symporter (SSF) (TC 2.A.21) family.

The protein localises to the cell inner membrane. Functionally, transports acetate. The polypeptide is Cation/acetate symporter ActP (actP) (Salmonella typhi).